The primary structure comprises 225 residues: Thymidylate kinase (225 aa).

10 to 17 (GIDGAGKS) lines the ATP pocket.

It belongs to the thymidylate kinase family.

It carries out the reaction dTMP + ATP = dTDP + ADP. Its function is as follows. Phosphorylation of dTMP to form dTDP in both de novo and salvage pathways of dTTP synthesis. The protein is Thymidylate kinase of Polaromonas sp. (strain JS666 / ATCC BAA-500).